The primary structure comprises 467 residues: Syntaxin-5 (467 aa).

Disordered stretches follow at residues 1 to 53 (MQTR…QSLV) and 58 to 77 (GHEAAIHIGDNYQSGDSIST). At 1 to 445 (MQTRRRLHQT…KYFQSVSKNR (445 aa)) the chain is on the cytoplasmic side. Positions 10–22 (TDQQDYSSSSTYT) are enriched in low complexity. The segment covering 29–45 (GGAGAGSVGTGTAGGSV) has biased composition (gly residues). The span at 68 to 77 (NYQSGDSIST) shows a compositional bias: polar residues. Residues 245-269 (IKGDLNALNQQIARLQDISKDQRRH) are a coiled coil. The tract at residues 310–335 (QQKTRRDQFSQGPGPLAAHTVSPSTA) is disordered. Residues 375 to 437 (DNYVQQRAET…EAAHGEILKY (63 aa)) enclose the t-SNARE coiled-coil homology domain. Residues 446–466 (WLMIKIFGVLIFFFLFFVVFM) form a helical; Anchor for type IV membrane protein membrane-spanning segment. Position 467 (S467) is a topological domain, vesicular.

Belongs to the syntaxin family. As to quaternary structure, homodimer.

It is found in the golgi apparatus. The protein resides in the cis-Golgi network membrane. Functionally, mediates endoplasmic reticulum to Golgi transport. The protein is Syntaxin-5 of Drosophila melanogaster (Fruit fly).